A 466-amino-acid chain; its full sequence is GTPase Der (466 aa).

2 consecutive EngA-type G domains span residues 30-193 and 203-376; these read PVVA…PEVS and RRVA…ASWD. GTP contacts are provided by residues 36-43, 83-87, 145-148, 209-216, 256-260, and 321-324; these read GRPNVGKS, DTGGW, NKVD, GKPNVGKS, DTAGL, and NKWD. The region spanning 377 to 459 is the KH-like domain; it reads TRIATGPLNS…PIRINVRVRE (83 aa).

Belongs to the TRAFAC class TrmE-Era-EngA-EngB-Septin-like GTPase superfamily. EngA (Der) GTPase family. In terms of assembly, associates with the 50S ribosomal subunit.

Functionally, GTPase that plays an essential role in the late steps of ribosome biogenesis. In Mycobacterium avium (strain 104), this protein is GTPase Der.